The primary structure comprises 567 residues: Proline--tRNA ligase (567 aa).

This sequence belongs to the class-II aminoacyl-tRNA synthetase family. ProS type 1 subfamily. In terms of assembly, homodimer.

Its subcellular location is the cytoplasm. The catalysed reaction is tRNA(Pro) + L-proline + ATP = L-prolyl-tRNA(Pro) + AMP + diphosphate. Catalyzes the attachment of proline to tRNA(Pro) in a two-step reaction: proline is first activated by ATP to form Pro-AMP and then transferred to the acceptor end of tRNA(Pro). As ProRS can inadvertently accommodate and process non-cognate amino acids such as alanine and cysteine, to avoid such errors it has two additional distinct editing activities against alanine. One activity is designated as 'pretransfer' editing and involves the tRNA(Pro)-independent hydrolysis of activated Ala-AMP. The other activity is designated 'posttransfer' editing and involves deacylation of mischarged Ala-tRNA(Pro). The misacylated Cys-tRNA(Pro) is not edited by ProRS. The sequence is that of Proline--tRNA ligase from Staphylococcus aureus (strain USA300).